Consider the following 196-residue polypeptide: Ribonuclease HII (196 aa).

In terms of domain architecture, RNase H type-2 spans 15 to 196 (FILAGIDEAG…RLSFTKALYK (182 aa)). A divalent metal cation is bound by residues Asp-21, Glu-22, and Asp-112.

This sequence belongs to the RNase HII family. It depends on Mn(2+) as a cofactor. Requires Mg(2+) as cofactor.

The protein localises to the cytoplasm. The catalysed reaction is Endonucleolytic cleavage to 5'-phosphomonoester.. In terms of biological role, endonuclease that specifically degrades the RNA of RNA-DNA hybrids. The chain is Ribonuclease HII from Rickettsia bellii (strain OSU 85-389).